A 153-amino-acid polypeptide reads, in one-letter code: Probable succinate transporter subunit YjjB (153 aa).

The next 4 membrane-spanning stretches (helical) occupy residues tryptophan 7–phenylalanine 27, methionine 51–isoleucine 71, valine 83–isoleucine 103, and phenylalanine 125–tryptophan 145.

It belongs to the ThrE exporter (TC 2.A.79) family. The transporter is composed of YjjB and YjjP.

Its subcellular location is the cell inner membrane. Involved in succinate export with YjjP. Both proteins are required for export. This Yersinia pestis bv. Antiqua (strain Antiqua) protein is Probable succinate transporter subunit YjjB.